The following is a 61-amino-acid chain: UPF0181 protein MS1074 (61 aa).

This sequence belongs to the UPF0181 family.

In Mannheimia succiniciproducens (strain KCTC 0769BP / MBEL55E), this protein is UPF0181 protein MS1074.